Consider the following 209-residue polypeptide: MADS-box transcription factor 2 (209 aa).

An MADS-box domain is found at 1–61 (MGRGKIEIKR…GKLYDYCSPK (61 aa)). Residues 84 to 170 (HKSLSAEIDR…AFKLHQQDIA (87 aa)) form the K-box domain.

As to expression, highly expressed in anthers and carpels. Expressed in pollen, tapetum and stigma.

The protein resides in the nucleus. Its function is as follows. Probable transcription factor involved in the development of floral organs. B-class protein required for normal development of lodicules (whorl 2). In Oryza sativa subsp. japonica (Rice), this protein is MADS-box transcription factor 2 (MADS2).